The following is a 342-amino-acid chain: AA9 family lytic polysaccharide monooxygenase H (342 aa).

A signal peptide spans 1–19 (MSKASALLAGLTGAALVAA). Cu(2+)-binding residues include H20 and H106. 2 disulfides stabilise this stretch: C75/C195 and C117/C121. O2 contacts are provided by H181 and Q190. Y192 lines the Cu(2+) pocket. The interval 263–308 (ATVPGGGGANPTATTTAATSAAPSTTLRTTTTSAAQTTAPPSGDVQ) is disordered. Residues 272–305 (NPTATTTAATSAAPSTTLRTTTTSAAQTTAPPSG) are compositionally biased toward low complexity. The CBM1 domain occupies 306–342 (DVQTKYGQCGGNGWTGPTVCAPGSSCSVLNEWYSQCL).

The protein belongs to the polysaccharide monooxygenase AA9 family. The cofactor is Cu(2+).

It localises to the secreted. The catalysed reaction is [(1-&gt;4)-beta-D-glucosyl]n+m + reduced acceptor + O2 = 4-dehydro-beta-D-glucosyl-[(1-&gt;4)-beta-D-glucosyl]n-1 + [(1-&gt;4)-beta-D-glucosyl]m + acceptor + H2O.. With respect to regulation, the presence of lignin presents a significant source of antioxidants, which probably increase the activity by trapping liberated oxidized fragments. Lytic polysaccharide monooxygenase (LPMO) that depolymerizes crystalline and amorphous polysaccharides via the oxidation of scissile alpha- or beta-(1-4)-glycosidic bonds, yielding C1 or C4 oxidation products. Catalysis by LPMOs requires the reduction of the active-site copper from Cu(II) to Cu(I) by a reducing agent and H(2)O(2) or O(2) as a cosubstrate. Hydrolyzes weakly barley beta-glucan, carboxymethyl cellulose, lichenan, wheat arabinoxylan and birchwood xylan. Stimulates the hydrolysis of lignocellulosic substrates (such as hydrothermal pretreated wheat straw or steam-pretreated spruce), when combined with other cellulolytic enzymes. The sequence is that of AA9 family lytic polysaccharide monooxygenase H from Thermothelomyces thermophilus (strain ATCC 42464 / BCRC 31852 / DSM 1799) (Sporotrichum thermophile).